Reading from the N-terminus, the 220-residue chain is B-cell antigen receptor complex-associated protein alpha chain (220 aa).

The N-terminal stretch at 1–28 (MPGGLEALRALPLLLFLSYACLGPGCQA) is a signal peptide. Positions 29–117 (LRVEGGPPSL…ILKRSCGTYL (89 aa)) constitute an Ig-like C2-type domain. Residues 29–137 (LRVEGGPPSL…LDMGEGTKNR (109 aa)) are Extracellular-facing. The cysteines at positions 50 and 101 are disulfide-linked. Asn58 and Asn68 each carry an N-linked (GlcNAc...) asparagine glycan. A helical membrane pass occupies residues 138–159 (IITAEGIILLFCAVVPGTLLLF). The Cytoplasmic segment spans residues 160–220 (RKRWQNEKFG…HIGDAQLEKP (61 aa)). The ITAM domain maps to 171 to 199 (DMPDDYEDENLYEGLNLDDCSMYEDISRG). 2 positions are modified to phosphotyrosine; by SRC-type Tyr-kinases: Tyr182 and Tyr193. Arg198 is modified (asymmetric dimethylarginine; by PRMT1). Tyr204 carries the phosphotyrosine; by Tyr-kinases modification.

Heterodimer of alpha and beta chains; disulfide-linked. Part of the B-cell antigen receptor complex where the alpha/beta chain heterodimer is non-covalently associated with an antigen-specific membrane-bound surface immunoglobulin of two heavy chains and two light chains. Interacts through its phosphorylated ITAM domain with the SH2 domains of SYK which stimulates SYK autophosphorylation and activation. Also interacts, when phosphorylated on Tyr-204, with the SH2 domain of BLNK/SLP65, bringing BLNK into proximity with SYK and allowing SYK to phosphorylate BLNK which is necessary for trafficking of the BCR to late endosomes. Interacts with Src-family tyrosine kinases including FYN and LYN, increasing their activity. Post-translationally, phosphorylated on tyrosine, serine and threonine residues upon B-cell activation. Phosphorylation of tyrosine residues by Src-family kinases, including LYN, is an early and essential feature of the BCR signaling cascade. The phosphorylated tyrosines serve as docking sites for SH2-domain containing kinases, leading to their activation which in turn leads to phosphorylation of downstream targets. Phosphorylation of serine and threonine residues may prevent subsequent tyrosine phosphorylation. Arginine methylation in the ITAM domain may interfere with the binding of SYK. It promotes signals leading to B-cell differentiation. As to expression, B-cells.

The protein localises to the cell membrane. Required in cooperation with CD79B for initiation of the signal transduction cascade activated by binding of antigen to the B-cell antigen receptor complex (BCR) which leads to internalization of the complex, trafficking to late endosomes and antigen presentation. Also required for BCR surface expression and for efficient differentiation of pro- and pre-B-cells. Stimulates SYK autophosphorylation and activation. Binds to BLNK, bringing BLNK into proximity with SYK and allowing SYK to phosphorylate BLNK. Also interacts with and increases activity of some Src-family tyrosine kinases. Represses BCR signaling during development of immature B-cells. The polypeptide is B-cell antigen receptor complex-associated protein alpha chain (Cd79a) (Mus musculus (Mouse)).